Consider the following 106-residue polypeptide: Large ribosomal subunit protein bL21 (106 aa).

This sequence belongs to the bacterial ribosomal protein bL21 family. In terms of assembly, part of the 50S ribosomal subunit. Contacts protein L20.

This protein binds to 23S rRNA in the presence of protein L20. The sequence is that of Large ribosomal subunit protein bL21 from Coprothermobacter proteolyticus (strain ATCC 35245 / DSM 5265 / OCM 4 / BT).